We begin with the raw amino-acid sequence, 347 residues long: DNA damage tolerance protein RHC31 (347 aa).

At Ser-9 the chain carries Phosphoserine. Lys-35 participates in a covalent cross-link: Glycyl lysine isopeptide (Lys-Gly) (interchain with G-Cter in SUMO).

Could be involved in a ubiquitin-related process important for DNA damage tolerance. In Saccharomyces cerevisiae (strain ATCC 204508 / S288c) (Baker's yeast), this protein is DNA damage tolerance protein RHC31 (AOS1).